The primary structure comprises 188 residues: Elongation factor P (188 aa).

Belongs to the elongation factor P family.

The protein localises to the cytoplasm. It functions in the pathway protein biosynthesis; polypeptide chain elongation. Functionally, involved in peptide bond synthesis. Stimulates efficient translation and peptide-bond synthesis on native or reconstituted 70S ribosomes in vitro. Probably functions indirectly by altering the affinity of the ribosome for aminoacyl-tRNA, thus increasing their reactivity as acceptors for peptidyl transferase. This is Elongation factor P from Bradyrhizobium diazoefficiens (strain JCM 10833 / BCRC 13528 / IAM 13628 / NBRC 14792 / USDA 110).